The primary structure comprises 267 residues: 5'-methylthioadenosine nucleosidase (267 aa).

E38 functions as the Proton acceptor in the catalytic mechanism. S-methyl-5'-thioadenosine contacts are provided by residues T116, 199–202 (KDME), and D225. Positions 199 and 225 each coordinate adenine. The Proton donor role is filled by D225.

It belongs to the PNP/UDP phosphorylase family. MtnN subfamily. Homodimer. Interacts with CBL3 in a calcium-dependent manner. In terms of tissue distribution, expressed in roots, leaves, stems, cauline leaves and flowers.

The catalysed reaction is S-methyl-5'-thioadenosine + H2O = 5-(methylsulfanyl)-D-ribose + adenine. It functions in the pathway amino-acid biosynthesis; L-methionine biosynthesis via salvage pathway; S-methyl-5-thio-alpha-D-ribose 1-phosphate from S-methyl-5'-thioadenosine (hydrolase route): step 1/2. Inhibited by CBL3 in a calcium-dependent manner. Inhibited by 5'-methylthiotubercidin (MTT) and by formycin A (FMA). Functionally, enzyme of the methionine cycle that catalyzes the irreversible cleavage of the glycosidic bond in 5'-methylthioadenosine (MTA) to adenine and 5'-methylthioribose. Contributes to the maintenance of AdoMet homeostasis and is required to sustain high rates of ethylene synthesis. Inactive towards S-adenosylhomocysteine (SAH/AdoHcy). The protein is 5'-methylthioadenosine nucleosidase (MTN1) of Arabidopsis thaliana (Mouse-ear cress).